The following is a 219-amino-acid chain: Cytidylate kinase (219 aa).

Residue 11–19 (GPAGVGKTT) participates in ATP binding.

This sequence belongs to the cytidylate kinase family. Type 1 subfamily.

It localises to the cytoplasm. The enzyme catalyses CMP + ATP = CDP + ADP. It catalyses the reaction dCMP + ATP = dCDP + ADP. In Oleidesulfovibrio alaskensis (strain ATCC BAA-1058 / DSM 17464 / G20) (Desulfovibrio alaskensis), this protein is Cytidylate kinase.